Here is a 426-residue protein sequence, read N- to C-terminus: Peptidoglycan DD-endopeptidase ShyB (426 aa).

The signal sequence occupies residues 1-21 (MGQFRFLALIVAVLCFSVALF). The span at 32–48 (SYSVPLNQSVNTSQPPS) shows a compositional bias: polar residues. Positions 32–55 (SYSVPLNQSVNTSQPPSSEMVPSD) are disordered. Residues His-291, Asp-295, and His-372 each coordinate Zn(2+).

The protein belongs to the peptidase M23B family. As to quaternary structure, monomer. It depends on Zn(2+) as a cofactor.

Its subcellular location is the periplasm. Its pathway is cell wall degradation; peptidoglycan degradation. Not inhibited by metal chelator EDTA. Its function is as follows. Cell wall peptidoglycan (PG) DD-endopeptidase, which may act as a substitute for other zinc-dependent PG endopeptidases (ShyA and ShyC) during zinc starvation. Hydrolyzes peptide cross-links which covalently connect adjacent PG strands probably to allow insertion of new glycans and thus cell wall expansion. Degrades purified whole PG sacculi in vitro. It is unclear how it is able to function in low zinc environments, but that may possibly be due to binding zinc with very high affinity, utilizing an alternative metal cofactor or that it may function independently of a bound metal cofactor. This Vibrio cholerae serotype O1 (strain ATCC 39315 / El Tor Inaba N16961) protein is Peptidoglycan DD-endopeptidase ShyB.